Here is a 129-residue protein sequence, read N- to C-terminus: Small ribosomal subunit protein uS11 (129 aa).

It belongs to the universal ribosomal protein uS11 family. As to quaternary structure, part of the 30S ribosomal subunit. Interacts with proteins S7 and S18. Binds to IF-3.

Located on the platform of the 30S subunit, it bridges several disparate RNA helices of the 16S rRNA. Forms part of the Shine-Dalgarno cleft in the 70S ribosome. In Rhodopseudomonas palustris (strain BisB5), this protein is Small ribosomal subunit protein uS11.